The sequence spans 416 residues: 4-hydroxy-3-methylbut-2-en-1-yl diphosphate synthase (flavodoxin) (416 aa).

Residues Cys304, Cys307, Cys350, and Glu357 each contribute to the [4Fe-4S] cluster site.

This sequence belongs to the IspG family. [4Fe-4S] cluster serves as cofactor.

The catalysed reaction is (2E)-4-hydroxy-3-methylbut-2-enyl diphosphate + oxidized [flavodoxin] + H2O + 2 H(+) = 2-C-methyl-D-erythritol 2,4-cyclic diphosphate + reduced [flavodoxin]. It participates in isoprenoid biosynthesis; isopentenyl diphosphate biosynthesis via DXP pathway; isopentenyl diphosphate from 1-deoxy-D-xylulose 5-phosphate: step 5/6. Its function is as follows. Converts 2C-methyl-D-erythritol 2,4-cyclodiphosphate (ME-2,4cPP) into 1-hydroxy-2-methyl-2-(E)-butenyl 4-diphosphate. This chain is 4-hydroxy-3-methylbut-2-en-1-yl diphosphate synthase (flavodoxin), found in Burkholderia pseudomallei (strain K96243).